A 249-amino-acid chain; its full sequence is tRNA pseudouridine synthase A (249 aa).

Catalysis depends on aspartate 53, which acts as the Nucleophile. Tyrosine 111 serves as a coordination point for substrate.

It belongs to the tRNA pseudouridine synthase TruA family. In terms of assembly, homodimer.

The enzyme catalyses uridine(38/39/40) in tRNA = pseudouridine(38/39/40) in tRNA. Formation of pseudouridine at positions 38, 39 and 40 in the anticodon stem and loop of transfer RNAs. In Streptococcus equi subsp. equi (strain 4047), this protein is tRNA pseudouridine synthase A.